The sequence spans 153 residues: 6,7-dimethyl-8-ribityllumazine synthase (153 aa).

5-amino-6-(D-ribitylamino)uracil-binding positions include Phe-21, 55 to 57, and 79 to 81; these read AFE and TVI. 84 to 85 serves as a coordination point for (2S)-2-hydroxy-3-oxobutyl phosphate; sequence AT. The active-site Proton donor is the His-87. Position 112 (Phe-112) interacts with 5-amino-6-(D-ribitylamino)uracil. Arg-126 is a binding site for (2S)-2-hydroxy-3-oxobutyl phosphate.

The protein belongs to the DMRL synthase family. Forms an icosahedral capsid composed of 60 subunits, arranged as a dodecamer of pentamers.

It catalyses the reaction (2S)-2-hydroxy-3-oxobutyl phosphate + 5-amino-6-(D-ribitylamino)uracil = 6,7-dimethyl-8-(1-D-ribityl)lumazine + phosphate + 2 H2O + H(+). The protein operates within cofactor biosynthesis; riboflavin biosynthesis; riboflavin from 2-hydroxy-3-oxobutyl phosphate and 5-amino-6-(D-ribitylamino)uracil: step 1/2. Its function is as follows. Catalyzes the formation of 6,7-dimethyl-8-ribityllumazine by condensation of 5-amino-6-(D-ribitylamino)uracil with 3,4-dihydroxy-2-butanone 4-phosphate. This is the penultimate step in the biosynthesis of riboflavin. This Bacillus cereus (strain B4264) protein is 6,7-dimethyl-8-ribityllumazine synthase.